The sequence spans 702 residues: Ribosomal RNA large subunit methyltransferase K/L (702 aa).

In terms of domain architecture, THUMP spans 43-154 (LVYQSLMWSR…KETASIALDL (112 aa)).

This sequence belongs to the methyltransferase superfamily. RlmKL family.

It is found in the cytoplasm. The catalysed reaction is guanosine(2445) in 23S rRNA + S-adenosyl-L-methionine = N(2)-methylguanosine(2445) in 23S rRNA + S-adenosyl-L-homocysteine + H(+). It carries out the reaction guanosine(2069) in 23S rRNA + S-adenosyl-L-methionine = N(2)-methylguanosine(2069) in 23S rRNA + S-adenosyl-L-homocysteine + H(+). Specifically methylates the guanine in position 2445 (m2G2445) and the guanine in position 2069 (m7G2069) of 23S rRNA. In Escherichia coli O1:K1 / APEC, this protein is Ribosomal RNA large subunit methyltransferase K/L.